A 557-amino-acid polypeptide reads, in one-letter code: Formate--tetrahydrofolate ligase (557 aa).

67-74 (TPAGEGKT) is a binding site for ATP.

It belongs to the formate--tetrahydrofolate ligase family.

It carries out the reaction (6S)-5,6,7,8-tetrahydrofolate + formate + ATP = (6R)-10-formyltetrahydrofolate + ADP + phosphate. The protein operates within one-carbon metabolism; tetrahydrofolate interconversion. This is Formate--tetrahydrofolate ligase from Cereibacter sphaeroides (strain KD131 / KCTC 12085) (Rhodobacter sphaeroides).